The primary structure comprises 339 residues: Serine/threonine-protein kinase SAPK2 (339 aa).

Residues 4-260 (YEVIKDIGSG…IPEIKNHPWF (257 aa)) enclose the Protein kinase domain. ATP-binding positions include 10-18 (IGSGNFGVA) and Lys-33. Residue Asp-123 is the Proton acceptor of the active site. The tract at residues 253 to 339 (EIKNHPWFLK…EDSGDFVCAL (87 aa)) is C-terminal.

This sequence belongs to the protein kinase superfamily. Ser/Thr protein kinase family. In terms of processing, phosphorylated.

It catalyses the reaction L-seryl-[protein] + ATP = O-phospho-L-seryl-[protein] + ADP + H(+). The catalysed reaction is L-threonyl-[protein] + ATP = O-phospho-L-threonyl-[protein] + ADP + H(+). In terms of biological role, may play a role in signal transduction of hyperosmotic response. Can phosphorylate BZIP46 in vitro. This is Serine/threonine-protein kinase SAPK2 (SAPK2) from Oryza sativa subsp. indica (Rice).